The sequence spans 552 residues: Metal transporter Nramp6.1 (552 aa).

An N-linked (GlcNAc...) asparagine glycan is attached at Asn-11. 7 helical membrane passes run 55–75 (FLSY…PGNL), 88–108 (ELLW…SLAA), 133–155 (CLWL…GTAF), 159–181 (ILFN…LLLG), 189–209 (KLEL…FGEM), 238–258 (IALL…ALVL), and 275–295 (YFLI…LAVI). N-linked (GlcNAc...) asparagine glycosylation occurs at Asn-306. A run of 5 helical transmembrane segments spans residues 338-358 (IYAI…TYAG), 377-397 (LVTR…GGSS), 402-422 (LIII…IPLL), 438-458 (IYII…NIYY), and 478-498 (VFIG…VIYL). Positions 511-552 (PNKNDPQQQTNMENGLAKSTEGPEMVDRAPYREDLADIPLPE) are disordered. Polar residues predominate over residues 514 to 523 (NDPQQQTNME). A compositionally biased stretch (basic and acidic residues) spans 535–545 (MVDRAPYREDL).

Belongs to the NRAMP (TC 2.A.55) family.

The protein localises to the membrane. Functionally, probable divalent metal transporter. The sequence is that of Metal transporter Nramp6.1 from Populus trichocarpa (Western balsam poplar).